The following is a 751-amino-acid chain: Transposable element P transposase (751 aa).

A THAP-type zinc finger spans residues 1–77 (MKYCKFCCKA…LNADAVPSKV (77 aa)).

Its function is as follows. P-element transposase that specifically mediates transposition of P-elements. Mediates both; precise and imprecise excision. This Drosophila melanogaster (Fruit fly) protein is Transposable element P transposase.